We begin with the raw amino-acid sequence, 1070 residues long: Carbamoyl phosphate synthase large chain (1070 aa).

Residues 1-401 (MPKRDDIKTI…ALLKAVRSLE (401 aa)) form a carboxyphosphate synthetic domain region. Arg129, Arg169, Gly175, Gly176, Lys208, Ile210, Glu215, Gly241, Ile242, His243, Gln284, and Glu298 together coordinate ATP. The 195-residue stretch at 133–327 (RDLMNELGEP…IAKLAAKIAV (195 aa)) folds into the ATP-grasp 1 domain. Residues Gln284, Glu298, and Asn300 each contribute to the Mg(2+) site. Residues Gln284, Glu298, and Asn300 each coordinate Mn(2+). Positions 402–546 (VGADHLLLEE…YSTYEEENES (145 aa)) are oligomerization domain. The tract at residues 547 to 929 (TRSAKESVIV…ALYKGFVASG (383 aa)) is carbamoyl phosphate synthetic domain. Residues 671-861 (EKALEILQIP…MANVATRVIL (191 aa)) form the ATP-grasp 2 domain. Arg707, Arg746, Val748, Glu752, Gly777, Val778, His779, Ser780, Gln820, and Glu832 together coordinate ATP. 3 residues coordinate Mg(2+): Gln820, Glu832, and Asn834. Mn(2+) contacts are provided by Gln820, Glu832, and Asn834. In terms of domain architecture, MGS-like spans 930–1070 (TTMHDYGTVL…SEVKQPKVRV (141 aa)). Positions 930–1070 (TTMHDYGTVL…SEVKQPKVRV (141 aa)) are allosteric domain.

It belongs to the CarB family. In terms of assembly, composed of two chains; the small (or glutamine) chain promotes the hydrolysis of glutamine to ammonia, which is used by the large (or ammonia) chain to synthesize carbamoyl phosphate. Tetramer of heterodimers (alpha,beta)4. Requires Mg(2+) as cofactor. The cofactor is Mn(2+).

It carries out the reaction hydrogencarbonate + L-glutamine + 2 ATP + H2O = carbamoyl phosphate + L-glutamate + 2 ADP + phosphate + 2 H(+). The catalysed reaction is hydrogencarbonate + NH4(+) + 2 ATP = carbamoyl phosphate + 2 ADP + phosphate + 2 H(+). It participates in amino-acid biosynthesis; L-arginine biosynthesis; carbamoyl phosphate from bicarbonate: step 1/1. Its pathway is pyrimidine metabolism; UMP biosynthesis via de novo pathway; (S)-dihydroorotate from bicarbonate: step 1/3. Its function is as follows. Large subunit of the glutamine-dependent carbamoyl phosphate synthetase (CPSase). CPSase catalyzes the formation of carbamoyl phosphate from the ammonia moiety of glutamine, carbonate, and phosphate donated by ATP, constituting the first step of 2 biosynthetic pathways, one leading to arginine and/or urea and the other to pyrimidine nucleotides. The large subunit (synthetase) binds the substrates ammonia (free or transferred from glutamine from the small subunit), hydrogencarbonate and ATP and carries out an ATP-coupled ligase reaction, activating hydrogencarbonate by forming carboxy phosphate which reacts with ammonia to form carbamoyl phosphate. The chain is Carbamoyl phosphate synthase large chain from Listeria welshimeri serovar 6b (strain ATCC 35897 / DSM 20650 / CCUG 15529 / CIP 8149 / NCTC 11857 / SLCC 5334 / V8).